A 106-amino-acid chain; its full sequence is Large ribosomal subunit protein bL21 (106 aa).

Belongs to the bacterial ribosomal protein bL21 family. In terms of assembly, part of the 50S ribosomal subunit. Contacts protein L20.

Functionally, this protein binds to 23S rRNA in the presence of protein L20. The chain is Large ribosomal subunit protein bL21 from Streptomyces coelicolor (strain ATCC BAA-471 / A3(2) / M145).